The sequence spans 1845 residues: Proteasome activator complex subunit 4 (1845 aa).

Residues 1–13 (MEPAERAGGRDPL) show a composition bias toward basic and acidic residues. Positions 1–26 (MEPAERAGGRDPLEPGGRPGPDPQGF) are disordered. 2 HEAT repeats span residues 475–519 (PEGP…LVDC) and 1000–1039 (NFCC…NHSG). Phosphoserine is present on Ser1123. 2 HEAT repeats span residues 1181-1219 (RVLP…QLKR) and 1356-1394 (DAFL…GSKH). Ser1616 bears the Phosphoserine mark. 2 HEAT repeats span residues 1638–1676 (PHQV…YNLF) and 1682–1720 (EDAV…CNFL). The tract at residues 1652 to 1740 (ARSSSWHARY…EQLCKTKLPK (89 aa)) is bromodomain-like (BRDL).

Belongs to the BLM10 family. Homodimer. Component of the spermatoproteasome, a form of the proteasome specifically found in testis. Interacts with the 20S and 26S proteasomes. Phosphorylated.

The protein resides in the cytoplasm. Its subcellular location is the cytosol. The protein localises to the nucleus. It is found in the nucleus speckle. Functionally, associated component of the proteasome that specifically recognizes acetylated histones and promotes ATP- and ubiquitin-independent degradation of core histones during spermatogenesis and DNA damage response. Recognizes and binds acetylated histones via its bromodomain-like (BRDL) region and activates the proteasome by opening the gated channel for substrate entry. Binds to the core proteasome via its C-terminus, which occupies the same binding sites as the proteasomal ATPases, opening the closed structure of the proteasome via an active gating mechanism. Component of the spermatoproteasome, a form of the proteasome specifically found in testis: binds to acetylated histones and promotes degradation of histones, thereby participating actively to the exchange of histones during spermatogenesis. Also involved in DNA damage response in somatic cells, by promoting degradation of histones following DNA double-strand breaks. The polypeptide is Proteasome activator complex subunit 4 (PSME4) (Bos taurus (Bovine)).